Consider the following 232-residue polypeptide: MHPVDKKSLALKIYEATGYQFRDLDLLLEALTHPRLSYKSAANYERLEFLGDAVLSMTVSEMLYRLFPDDDEGCLTRKRTALVRGSEVVEIARSIGLGELILMSGGERTCGGSDNPGTLENALEALIGAMYMDGGPEAYRSFIHKHWLARAQHMSYTPPQDPKTALQEWVQGRGWAMPLYKLVSKSGPEHKPVFAVEVSIQEHGNVLGTGSSKKLAEQEAAKLMLKKITELP.

The RNase III domain occupies 10–135 (ALKIYEATGY…LIGAMYMDGG (126 aa)). Glutamate 48 serves as a coordination point for Mg(2+). Aspartate 52 is an active-site residue. Mg(2+) contacts are provided by asparagine 121 and glutamate 124. Residue glutamate 124 is part of the active site. The 70-residue stretch at 161 to 230 (DPKTALQEWV…AKLMLKKITE (70 aa)) folds into the DRBM domain.

It belongs to the ribonuclease III family. Homodimer. The cofactor is Mg(2+).

It localises to the cytoplasm. The enzyme catalyses Endonucleolytic cleavage to 5'-phosphomonoester.. In terms of biological role, digests double-stranded RNA. Involved in the processing of primary rRNA transcript to yield the immediate precursors to the large and small rRNAs (23S and 16S). Processes some mRNAs, and tRNAs when they are encoded in the rRNA operon. Processes pre-crRNA and tracrRNA of type II CRISPR loci if present in the organism. The polypeptide is Ribonuclease 3 (Anaplasma marginale (strain St. Maries)).